Reading from the N-terminus, the 179-residue chain is Molybdopterin synthase catalytic subunit (179 aa).

Residues 1 to 10 (MTTSEDQTTP) show a composition bias toward polar residues. The disordered stretch occupies residues 1–21 (MTTSEDQTTPAHLDPKTYPRH). Residues 127–128 (HR), lysine 143, and 150–152 (KRE) contribute to the substrate site.

The protein belongs to the MoaE family. MOCS2B subfamily. Heterotetramer; composed of 2 small (MOCS2A) and 2 large (MOCS2B) subunits.

Its subcellular location is the cytoplasm. It catalyses the reaction 2 [molybdopterin-synthase sulfur-carrier protein]-C-terminal-Gly-aminoethanethioate + cyclic pyranopterin phosphate + H2O = molybdopterin + 2 [molybdopterin-synthase sulfur-carrier protein]-C-terminal Gly-Gly + 2 H(+). Its pathway is cofactor biosynthesis; molybdopterin biosynthesis. Its function is as follows. Catalytic subunit of the molybdopterin synthase complex, a complex that catalyzes the conversion of precursor Z into molybdopterin. Acts by mediating the incorporation of 2 sulfur atoms from thiocarboxylated MOCS2A into precursor Z to generate a dithiolene group. This chain is Molybdopterin synthase catalytic subunit, found in Aspergillus oryzae (strain ATCC 42149 / RIB 40) (Yellow koji mold).